The following is a 509-amino-acid chain: uncharacterized protein (509 aa).

Positions 108 to 225 (GKSSLCNLLA…KRHKPLFPVI (118 aa)) constitute a G domain.

This is an uncharacterized protein from Acinetobacter baylyi (strain ATCC 33305 / BD413 / ADP1).